Here is a 104-residue protein sequence, read N- to C-terminus: Large ribosomal subunit protein uL24 (104 aa).

This sequence belongs to the universal ribosomal protein uL24 family. As to quaternary structure, part of the 50S ribosomal subunit.

In terms of biological role, one of two assembly initiator proteins, it binds directly to the 5'-end of the 23S rRNA, where it nucleates assembly of the 50S subunit. Its function is as follows. One of the proteins that surrounds the polypeptide exit tunnel on the outside of the subunit. This Brevibacillus brevis (strain 47 / JCM 6285 / NBRC 100599) protein is Large ribosomal subunit protein uL24.